A 170-amino-acid chain; its full sequence is Zinc finger matrin-type protein 5 (170 aa).

A C3H1-type zinc finger spans residues 51–79; sequence EQNKRPCRKFLLTGQCDFGSNCRFSHMSE. The segment at 150–170 is disordered; the sequence is PPSLRAPPPGGWPLQPSVQWG.

In terms of assembly, component of the U11/U12 snRNPs that are part of the U12-type spliceosome.

It is found in the nucleus. This Bos taurus (Bovine) protein is Zinc finger matrin-type protein 5 (ZMAT5).